Reading from the N-terminus, the 817-residue chain is MFARGWLLGALLLMTLATVSVARPSLKIDLVNTSAPEEPPTKNQNCVPVLFSVHPGELLKLKCPLSGADDVVWTKDSSSLRPDNRTLVARDWLQISDATPKDSGLYSCSATGLRDCDVFSFIVNVTDAISSGDDEDDTERSDDVGADGEQMRLPYWTFPEKMEKKLHAVPAANTVKFRCAAAGNPKPKMRWLKNAKPFRQEDRMGGYKVRLQHWTLIMESVVPSDKGNYTCLVENQYGSIDHTYTLDVVERSPHRPILQAGLPANVTVQVGQDAKFVCKVYSDAQPHIQWLQHYTKNGSCCGPDGLPYVRVLKTAGVNTTDKEIEVLYLPNVTFEDAGEYTCLAGNSIGISYHTAWLTVHPAETNPIETDYPPDYVEIAIYCIGVFLIACMVVIVVVCRMRTSAKKPDFSSQPAVHKLTKQIPLRRQVTVSSDSSSSMSSSTPLVRITTRRSSAHDDPIPEYDLPEDPRWEFSRDKLTLGKPLGEGCFGQVVMAEALGIDKDKPKEAVTVAVKMLKDDATEKDLSDLVSEMEMMKMIGRHKNIINLLGACTQDGPLYVIVEYASKGNLREYLRARRPPGMEYSYDIARVSDEPLTFKDLVSCTYQVARGMEYLASQKCIHRDLAARNVLVTESNVMKIADFGLARDVHNIDYYKKTTNGRLPVKWMAPEALFDRVYTHQSDVWSFGVLMWEIFTLGGSPYPGIPVEELFKLLKEGHRMDKPANCTNELYMMMKDCWHAISSHRPTFKQLVEDLDRILTLATNEEYLDLCAPVEQYSPSFPDTRSSCPSGDDSVFSHDPLADEPCLPKYQHINGGIKT.

A signal peptide spans 1–22 (MFARGWLLGALLLMTLATVSVA). The Extracellular portion of the chain corresponds to 23 to 377 (RPSLKIDLVN…ETDYPPDYVE (355 aa)). Ig-like C2-type domains lie at 26-126 (LKID…VNVT), 159-247 (PEKM…YTLD), and 256-358 (PILQ…AWLT). Residues asparagine 32, asparagine 84, and asparagine 124 are each glycosylated (N-linked (GlcNAc...) asparagine). A disulfide bond links cysteine 63 and cysteine 108. The interval 161–178 (KMEKKLHAVPAANTVKFR) is heparin-binding. A disulfide bridge connects residues cysteine 179 and cysteine 231. N-linked (GlcNAc...) asparagine glycosylation is found at asparagine 228, asparagine 265, asparagine 297, asparagine 318, and asparagine 331. Residues cysteine 278 and cysteine 342 are joined by a disulfide bond. Residues 378–398 (IAIYCIGVFLIACMVVIVVVC) traverse the membrane as a helical segment. The Cytoplasmic portion of the chain corresponds to 399–817 (RMRTSAKKPD…YQHINGGIKT (419 aa)). Residues 429-465 (TVSSDSSSSMSSSTPLVRITTRRSSAHDDPIPEYDLP) are disordered. A compositionally biased stretch (low complexity) spans 431 to 441 (SSDSSSSMSSS). Residue tyrosine 462 is modified to Phosphotyrosine; by autocatalysis. Positions 477–766 (LTLGKPLGEG…LTLATNEEYL (290 aa)) constitute a Protein kinase domain. ATP contacts are provided by residues 483 to 491 (LGEGCFGQV), lysine 513, 561 to 563 (EYA), and asparagine 567. A Phosphotyrosine; by autocatalysis modification is found at tyrosine 582. The active-site Proton acceptor is aspartate 622. Phosphotyrosine; by autocatalysis is present on residues tyrosine 652, tyrosine 653, and tyrosine 765.

It belongs to the protein kinase superfamily. Tyr protein kinase family. Fibroblast growth factor receptor subfamily. Monomer. Homodimer after ligand binding. Post-translationally, autophosphorylated. Binding of FGF family members together with heparan sulfate proteoglycan or heparin promotes receptor dimerization and autophosphorylation on tyrosine residues. Autophosphorylation occurs in trans between the two FGFR molecules present in the dimer. N-glycosylated in the endoplasmic reticulum. The N-glycan chains undergo further maturation to an Endo H-resistant form in the Golgi apparatus. In terms of processing, ubiquitinated. FGFR2 is rapidly ubiquitinated after autophosphorylation, leading to internalization and degradation. Subject to degradation both in lysosomes and by the proteasome.

The protein localises to the cell membrane. It localises to the golgi apparatus. It is found in the cytoplasmic vesicle. It catalyses the reaction L-tyrosyl-[protein] + ATP = O-phospho-L-tyrosyl-[protein] + ADP + H(+). Its activity is regulated as follows. Present in an inactive conformation in the absence of bound ligand. Ligand binding leads to dimerization and activation by autophosphorylation on tyrosine residues. Tyrosine-protein kinase that acts as a cell-surface receptor for fibroblast growth factors and plays an essential role in the regulation of cell proliferation, differentiation, migration and apoptosis, and in the regulation of embryonic development. Required for normal embryonic patterning, limb bud development, lung morphogenesis, osteogenesis and skin development. Plays an essential role in the regulation of osteoblast differentiation, proliferation and apoptosis, and is required for normal skeleton development. Promotes cell proliferation in keratinocytes and immature osteoblasts, but promotes apoptosis in differentiated osteoblasts. Phosphorylates PLCG1, FRS2 and PAK4. Ligand binding leads to the activation of several signaling cascades. Activation of PLCG1 leads to the production of the cellular signaling molecules diacylglycerol and inositol 1,4,5-trisphosphate. Phosphorylation of FRS2 triggers recruitment of GRB2, GAB1, PIK3R1 and SOS1, and mediates activation of RAS, MAPK1/ERK2, MAPK3/ERK1 and the MAP kinase signaling pathway, as well as of the AKT1 signaling pathway. FGFR2 signaling is down-regulated by ubiquitination, internalization and degradation. Mutations that lead to constitutive kinase activation or impair normal FGFR2 maturation, internalization and degradation lead to aberrant signaling. Over-expressed FGFR2 promotes activation of STAT1. This chain is Fibroblast growth factor receptor 2 (fgfr2), found in Danio rerio (Zebrafish).